We begin with the raw amino-acid sequence, 72 residues long: DNA-directed RNA polymerase subunit omega (72 aa).

The protein belongs to the RNA polymerase subunit omega family. The RNAP catalytic core consists of 2 alpha, 1 beta, 1 beta' and 1 omega subunit. When a sigma factor is associated with the core the holoenzyme is formed, which can initiate transcription.

The enzyme catalyses RNA(n) + a ribonucleoside 5'-triphosphate = RNA(n+1) + diphosphate. Functionally, promotes RNA polymerase assembly. Latches the N- and C-terminal regions of the beta' subunit thereby facilitating its interaction with the beta and alpha subunits. This is DNA-directed RNA polymerase subunit omega from Clostridium kluyveri (strain NBRC 12016).